Reading from the N-terminus, the 777-residue chain is uncharacterized protein (777 aa).

Disordered regions lie at residues 1-101 (MNNN…NLSN), 128-150 (SYNNNNNNNNNNKNNNNNINDDN), 219-267 (HHIH…NNMN), 334-366 (SLPFSSLSDNNGDDDDDGIDDGIDDGIDDGIDD), 391-466 (ISNS…ATIS), 529-577 (KNLN…NNKG), 590-622 (LAQEPNDEQNKTKKELEEVKEEEEEEEEEISTI), and 713-751 (EKQGGDDPEDSSDSDSDSDSNSNSDSSDLGNITVRKWKP). Composition is skewed to low complexity over residues 128-147 (SYNNNNNNNNNNKNNNNNIN) and 243-265 (NNNNNNNNNNNNNNNNNINNHNN). Residues 334–343 (SLPFSSLSDN) show a composition bias toward polar residues. A compositionally biased stretch (acidic residues) spans 344–366 (NGDDDDDGIDDGIDDGIDDGIDD). A compositionally biased stretch (polar residues) spans 391 to 407 (ISNSFHQNQSPCNNSFK). Composition is skewed to low complexity over residues 408–466 (NNNN…ATIS) and 532–574 (NNNN…NNKN). Basic and acidic residues predominate over residues 597 to 606 (EQNKTKKELE). 2 stretches are compositionally biased toward acidic residues: residues 607–620 (EVKEEEEEEEEEIS) and 718–730 (DDPEDSSDSDSDS). Low complexity predominate over residues 731 to 740 (DSNSNSDSSD).

This is an uncharacterized protein from Dictyostelium discoideum (Social amoeba).